A 122-amino-acid polypeptide reads, in one-letter code: Crustacean hyperglycemic hormones 7 (122 aa).

A signal peptide spans 1–26 (MSLAMTAFRMMAVALVVVVASSTTWA). Disulfide bonds link C55–C91, C71–C87, and C74–C100. V120 carries the post-translational modification Valine amide.

Belongs to the arthropod CHH/MIH/GIH/VIH hormone family. As to expression, produced by the medulla terminalis X-organ in the eyestalks and transported to the sinus gland where they are stored and released.

The protein resides in the secreted. In terms of biological role, hormone found in the sinus gland of isopods and decapods which controls the blood sugar level. Has a secretagogue action over the amylase released from the midgut gland. May act as a stress hormone and may be involved in the control of molting and reproduction. The chain is Crustacean hyperglycemic hormones 7 from Penaeus japonicus (Kuruma prawn).